A 1243-amino-acid polypeptide reads, in one-letter code: Multifunctional 2-oxoglutarate metabolism enzyme (1243 aa).

The 2-oxoglutarate dehydrogenase E1, N-terminal part stretch occupies residues 1–40; it reads MNSPSPFGQNEWLVEEMYRKFREDPSSVDPSWHEFLVDYS. The segment covering 22-36 has biased composition (basic and acidic residues); the sequence is REDPSSVDPSWHEFL. The segment at 22-118 is disordered; that stretch reads REDPSSVDPS…AAPAGVSDDD (97 aa). The linker stretch occupies residues 41-103; that stretch reads PEPTNDAPAG…KKPEEKTSPA (63 aa). Positions 47–58 are enriched in low complexity; the sequence is APAGNGKPAAAP. Residues 59-71 show a composition bias toward pro residues; sequence TAPPEPASAPAPK. The segment covering 91–100 has biased composition (basic and acidic residues); sequence APEKKPEEKT. Low complexity predominate over residues 101-112; it reads SPAPKAKTAAPA. The segment at 104-353 is succinyltransferase E2; that stretch reads PKAKTAAPAG…LRTIHTLLLD (250 aa). His-332 acts as the Proton acceptor; for succinyltransferase activity in catalysis. The 2-oxoglutarate dehydrogenase E1, C-terminal part stretch occupies residues 354 to 1243; the sequence is DEFYDEIFRE…QQEIIDEAFG (890 aa). Arg-558 provides a ligand contact to thiamine diphosphate. 2-oxoglutarate contacts are provided by His-597 and Ser-622. Thiamine diphosphate is bound by residues Ser-622, Leu-624, Asp-661, Ala-662, Ala-663, and Asn-694. Position 661 (Asp-661) interacts with Mg(2+). Positions 694 and 696 each coordinate Mg(2+). The stretch at 799 to 831 forms a coiled coil; sequence DISMKEAEDALRDYQGQLERVFNEVRELEKHAI. Residue His-1036 coordinates 2-oxoglutarate. Residues Thr-1054, Arg-1070, Lys-1105, Ser-1108, Gln-1158, Arg-1165, and Arg-1166 each contribute to the acetyl-CoA site.

The protein belongs to the 2-oxoacid dehydrogenase family. Kgd subfamily. Homodimer. The 2-oxoglutarate dehydrogenase (ODH) complex contains multiple copies of three enzymatic components: 2-oxoglutarate dehydrogenase (E1), dihydrolipoamide succinyltransferase (E2) and lipoamide dehydrogenase (E3). The cofactor is Mg(2+). Requires thiamine diphosphate as cofactor.

It carries out the reaction glyoxylate + 2-oxoglutarate + H(+) = 2-hydroxy-3-oxoadipate + CO2. It catalyses the reaction 2-oxoglutarate + H(+) = succinate semialdehyde + CO2. The enzyme catalyses N(6)-[(R)-lipoyl]-L-lysyl-[protein] + 2-oxoglutarate + H(+) = N(6)-[(R)-S(8)-succinyldihydrolipoyl]-L-lysyl-[protein] + CO2. The catalysed reaction is N(6)-[(R)-dihydrolipoyl]-L-lysyl-[protein] + succinyl-CoA = N(6)-[(R)-S(8)-succinyldihydrolipoyl]-L-lysyl-[protein] + CoA. Its pathway is carbohydrate metabolism; tricarboxylic acid cycle; succinate from 2-oxoglutarate (transferase route): step 1/2. The protein operates within carbohydrate metabolism; tricarboxylic acid cycle; succinyl-CoA from 2-oxoglutarate (dehydrogenase route): step 1/1. With respect to regulation, alpha-ketoglutarate dehydrogenase and decarboxylase activities are inhibited by unphosphorylated GarA, and allosterically activated by acetyl-CoA, the main substrate of the TCA cycle. Shows three enzymatic activities that share a first common step, the attack of thiamine-PP on 2-oxoglutarate (alpha-ketoglutarate, KG), leading to the formation of an enamine-thiamine-PP intermediate upon decarboxylation. Thus, displays KGD activity, catalyzing the decarboxylation from five-carbon 2-oxoglutarate to four-carbon succinate semialdehyde (SSA). Also catalyzes C-C bond formation between the activated aldehyde formed after decarboxylation of alpha-ketoglutarate and the carbonyl of glyoxylate (GLX), to yield 2-hydroxy-3-oxoadipate (HOA), which spontaneously decarboxylates to form 5-hydroxylevulinate (HLA). And is also a component of the 2-oxoglutarate dehydrogenase (ODH) complex, that catalyzes the overall conversion of 2-oxoglutarate to succinyl-CoA and CO(2). The KG decarboxylase and KG dehydrogenase reactions provide two alternative, tightly regulated, pathways connecting the oxidative and reductive branches of the TCA cycle. This is Multifunctional 2-oxoglutarate metabolism enzyme (kgd) from Mycolicibacterium vanbaalenii (strain DSM 7251 / JCM 13017 / BCRC 16820 / KCTC 9966 / NRRL B-24157 / PYR-1) (Mycobacterium vanbaalenii).